Reading from the N-terminus, the 179-residue chain is Alkyl hydroperoxide reductase AhpD (179 aa).

Cysteine 130 (proton donor) is an active-site residue. Cysteine 130 and cysteine 133 form a disulfide bridge. Catalysis depends on cysteine 133, which acts as the Cysteine sulfenic acid (-SOH) intermediate.

Belongs to the AhpD family. In terms of assembly, homotrimer.

It catalyses the reaction N(6)-[(R)-dihydrolipoyl]-L-lysyl-[lipoyl-carrier protein] + a hydroperoxide = N(6)-[(R)-lipoyl]-L-lysyl-[lipoyl-carrier protein] + an alcohol + H2O. Its function is as follows. Antioxidant protein with alkyl hydroperoxidase activity. Required for the reduction of the AhpC active site cysteine residues and for the regeneration of the AhpC enzyme activity. The sequence is that of Alkyl hydroperoxide reductase AhpD from Rhodococcus erythropolis (strain PR4 / NBRC 100887).